The primary structure comprises 233 residues: MRSFFVTGTDTGVGKTIVSCGLAAAFRQKQADIGVFKPFLSGVPRTHPESDTSLLKDMSQTALSHEEITPFEWKEPLAPYTAAMLEGKSVSMADVMAHWSKIKNRHECFIVEGAGGISVPLGENYLVSDLIKAMELPAVIVTRPDLGTINHTYLTVEYAKNMGIEVLGIIINGVRSRPGLDEKTNPSMIETLCKVPILGITPKLDHVSSENIQHMIEKHIDVSSFMNLTQMGR.

12–17 provides a ligand contact to ATP; it reads GVGKTI. Position 16 (Thr-16) interacts with Mg(2+). Residue Lys-37 is part of the active site. Ser-41 lines the substrate pocket. ATP is bound by residues Asp-51, 112–115, and 202–204; these read EGAG and PKL. Mg(2+) is bound by residues Asp-51 and Glu-112.

The protein belongs to the dethiobiotin synthetase family. In terms of assembly, homodimer. It depends on Mg(2+) as a cofactor.

The protein resides in the cytoplasm. It catalyses the reaction (7R,8S)-7,8-diammoniononanoate + CO2 + ATP = (4R,5S)-dethiobiotin + ADP + phosphate + 3 H(+). Its pathway is cofactor biosynthesis; biotin biosynthesis; biotin from 7,8-diaminononanoate: step 1/2. Functionally, catalyzes a mechanistically unusual reaction, the ATP-dependent insertion of CO2 between the N7 and N8 nitrogen atoms of 7,8-diaminopelargonic acid (DAPA, also called 7,8-diammoniononanoate) to form a ureido ring. The protein is ATP-dependent dethiobiotin synthetase BioD of Bacillus velezensis (strain DSM 23117 / BGSC 10A6 / LMG 26770 / FZB42) (Bacillus amyloliquefaciens subsp. plantarum).